We begin with the raw amino-acid sequence, 62 residues long: Small ribosomal subunit protein bS21 (62 aa).

The segment covering 40–52 (KPSVKRKLKSEAA) has biased composition (basic and acidic residues). The tract at residues 40 to 62 (KPSVKRKLKSEAARKRKNKRRRY) is disordered. Residues 53 to 62 (RKRKNKRRRY) show a composition bias toward basic residues.

Belongs to the bacterial ribosomal protein bS21 family.

This chain is Small ribosomal subunit protein bS21, found in Limosilactobacillus fermentum (strain NBRC 3956 / LMG 18251) (Lactobacillus fermentum).